Reading from the N-terminus, the 418-residue chain is Creatine kinase U-type, mitochondrial (418 aa).

The N-terminal 39 residues, 1-39, are a transit peptide targeting the mitochondrion; the sequence is MAGPFSRLLSARPGLKLLALAGAGSLAAGILLRPESVRA. The cardiolipin-binding stretch occupies residues 40–64; sequence ATGERRRLYPPSAEYPDLRKHNNCM. Positions 46-132 constitute a Phosphagen kinase N-terminal domain; that stretch reads RLYPPSAEYP…FDPVIQERHN (87 aa). The residue at position 152 (serine 152) is a Phosphoserine. Positions 159-401 constitute a Phosphagen kinase C-terminal domain; sequence YVLSSRVRTG…NYLIDCERRL (243 aa). 162–166 contributes to the ATP binding site; the sequence is SSRVR. Serine 197 is modified (phosphoserine). Position 214 is a phosphothreonine (threonine 214). Histidine 225 lines the ATP pocket. Residue serine 233 is modified to Phosphoserine. ATP contacts are provided by residues arginine 270, arginine 326, 354–359, and aspartate 369; that span reads RGTGGV. Threonine 356 carries the post-translational modification Phosphothreonine.

It belongs to the ATP:guanido phosphotransferase family. Exists as an octamer composed of four MTCK homodimers. In terms of tissue distribution, in many tissues, with highest levels in brain gut and kidney. In the kidney localized primarily in the outer medulla in the thick ascending limb and distal convoluted tubule.

The protein resides in the mitochondrion inner membrane. It carries out the reaction creatine + ATP = N-phosphocreatine + ADP + H(+). Its function is as follows. Reversibly catalyzes the transfer of phosphate between ATP and various phosphogens (e.g. creatine phosphate). Creatine kinase isoenzymes play a central role in energy transduction in tissues with large, fluctuating energy demands, such as skeletal muscle, heart, brain and spermatozoa. The polypeptide is Creatine kinase U-type, mitochondrial (Ckmt1) (Rattus norvegicus (Rat)).